A 270-amino-acid chain; its full sequence is Interleukin-1 alpha (270 aa).

Positions 1–112 are excised as a propeptide; the sequence is MAKVPDLFED…EVEEEIMKPR (112 aa). At lysine 82 the chain carries N6-acetyllysine. The interval 82-86 is nuclear localization signal (NLS); the sequence is KKRRL. Serine 87 carries the phosphoserine modification. An N-linked (GlcNAc...) asparagine glycan is attached at asparagine 139.

Belongs to the IL-1 family. Monomer. Interacts with TMED10; the interaction mediates the translocation from the cytoplasm into the ERGIC (endoplasmic reticulum-Golgi intermediate compartment) and thereby secretion. Interacts with IL1R1. Interacts with S100A13; this interaction is the first step in the export of IL1A, followed by direct translocation of this complex across the plasma membrane. Post-translationally, acetylated within its nuclear localization sequence, which impacts subcellular localization. In terms of processing, proteolytic processed by CAPN1 in a calcium-dependent manner. Cleavage from 31 kDa precursor to 18 kDa biologically active molecules. Phosphorylated. Phosphorylation greatly enhances susceptibility to digestion and promotes the conversion of pre-IL1A alpha to the biologically active IL1A.

The protein localises to the nucleus. The protein resides in the cytoplasm. It is found in the secreted. Functionally, cytokine constitutively present intracellularly in nearly all resting non-hematopoietic cells that plays an important role in inflammation and bridges the innate and adaptive immune systems. After binding to its receptor IL1R1 together with its accessory protein IL1RAP, forms the high affinity interleukin-1 receptor complex. Signaling involves the recruitment of adapter molecules such as MYD88, IRAK1 or IRAK4. In turn, mediates the activation of NF-kappa-B and the three MAPK pathways p38, p42/p44 and JNK pathways. Within the cell, acts as an alarmin and cell death results in its liberation in the extracellular space after disruption of the cell membrane to induce inflammation and alert the host to injury or damage. In addition to its role as a danger signal, which occurs when the cytokine is passively released by cell necrosis, directly senses DNA damage and acts as signal for genotoxic stress without loss of cell integrity. In Felis catus (Cat), this protein is Interleukin-1 alpha (IL1A).